Reading from the N-terminus, the 404-residue chain is Keratin, type I cuticular Ha3-II (404 aa).

Residues 1-56 (MPYNFCLPSLSCRTSCSSRPCVPPSCHGYTLPGACNIPANVSNCNWFCEGSFNGSE) form a head region. The IF rod domain maps to 56 to 367 (EKETMQFLND…SLLESEDCKL (312 aa)). The coil 1A stretch occupies residues 57-91 (KETMQFLNDRLASYLEKVRQLERDNAELENLIRER). Residues 92-102 (SQQQEPLLCPS) are linker 1. A coil 1B region spans residues 103 to 203 (YQSYFKTIEE…HEQEVNTLRC (101 aa)). The segment at 204–219 (QLGDRLNVEVDAAPAV) is linker 12. Residues 220 to 363 (DLNQVLNETR…NTYRSLLESE (144 aa)) form a coil 2 region. Residues 364 to 404 (DCKLPSNPCATTNACEKPIGSCVTNPCGPRSRCGPCNTFGY) form a tail region.

This sequence belongs to the intermediate filament family.

In Homo sapiens (Human), this protein is Keratin, type I cuticular Ha3-II (KRT33B).